Here is an 861-residue protein sequence, read N- to C-terminus: Leucine--tRNA ligase (861 aa).

Residues 43 to 53 carry the 'HIGH' region motif; the sequence is PYPSGKLHMGH. The 'KMSKS' region signature appears at 588–592; sequence KMSKS. Residue K591 coordinates ATP.

The protein belongs to the class-I aminoacyl-tRNA synthetase family.

The protein resides in the cytoplasm. It catalyses the reaction tRNA(Leu) + L-leucine + ATP = L-leucyl-tRNA(Leu) + AMP + diphosphate. This is Leucine--tRNA ligase from Symbiobacterium thermophilum (strain DSM 24528 / JCM 14929 / IAM 14863 / T).